Consider the following 178-residue polypeptide: Cytochrome b6-f complex iron-sulfur subunit (178 aa).

Residues 20–42 traverse the membrane as a helical segment; sequence LLTFGSVTGVALGALYPVVNYFI. The region spanning 71–161 is the Rieske domain; that stretch reads THPAGDRSLV…VSVENDNVFV (91 aa). [2Fe-2S] cluster contacts are provided by cysteine 107, histidine 109, cysteine 125, and histidine 128. An intrachain disulfide couples cysteine 112 to cysteine 127.

The protein belongs to the Rieske iron-sulfur protein family. As to quaternary structure, the 4 large subunits of the cytochrome b6-f complex are cytochrome b6, subunit IV (17 kDa polypeptide, PetD), cytochrome f and the Rieske protein, while the 4 small subunits are PetG, PetL, PetM and PetN. The complex functions as a dimer. [2Fe-2S] cluster is required as a cofactor.

The protein localises to the cellular thylakoid membrane. It catalyses the reaction 2 oxidized [plastocyanin] + a plastoquinol + 2 H(+)(in) = 2 reduced [plastocyanin] + a plastoquinone + 4 H(+)(out). Its function is as follows. Component of the cytochrome b6-f complex, which mediates electron transfer between photosystem II (PSII) and photosystem I (PSI), cyclic electron flow around PSI, and state transitions. The protein is Cytochrome b6-f complex iron-sulfur subunit of Synechococcus sp. (strain WH7803).